The following is a 2004-amino-acid chain: Alpha-2-macroglobulin homolog (2004 aa).

An N-terminal signal peptide occupies residues 1–27; that stretch reads MLCCLVFKGLLSMDLLRFLLISPFALI.

The protein belongs to the protease inhibitor I39 (alpha-2-macroglobulin) family. Bacterial alpha-2-macroglobulin subfamily.

The sequence is that of Alpha-2-macroglobulin homolog from Yersinia pestis.